A 348-amino-acid chain; its full sequence is Glucose 1-dehydrogenase 2 (348 aa).

Cysteine 39 lines the Zn(2+) pocket. Substrate is bound at residue threonine 41. Histidine 64 and glutamate 65 together coordinate Zn(2+). 2 residues coordinate substrate: glutamate 110 and glutamate 146. Residue glutamate 146 coordinates Zn(2+). Residues 178-181 (AGPV), 260-262 (LGV), and 289-291 (SVN) each bind NADP(+). Asparagine 291 is a binding site for substrate.

Belongs to the zinc-containing alcohol dehydrogenase family. Glucose 1-dehydrogenase subfamily. Zn(2+) is required as a cofactor.

The catalysed reaction is D-glucose + NAD(+) = D-glucono-1,5-lactone + NADH + H(+). It carries out the reaction D-glucose + NADP(+) = D-glucono-1,5-lactone + NADPH + H(+). Functionally, catalyzes the NAD(P)(+)-dependent oxidation of D-glucose to D-gluconate via gluconolactone. Can utilize both NAD(+) and NADP(+) as electron acceptor. Is involved in the degradation of glucose through a non-phosphorylative variant of the Entner-Doudoroff pathway. The polypeptide is Glucose 1-dehydrogenase 2 (Vulcanisaeta moutnovskia (strain 768-28)).